The chain runs to 259 residues: Imidazole glycerol phosphate synthase subunit HisF (259 aa).

Catalysis depends on residues Asp11 and Asp130.

It belongs to the HisA/HisF family. In terms of assembly, heterodimer of HisH and HisF.

It localises to the cytoplasm. The catalysed reaction is 5-[(5-phospho-1-deoxy-D-ribulos-1-ylimino)methylamino]-1-(5-phospho-beta-D-ribosyl)imidazole-4-carboxamide + L-glutamine = D-erythro-1-(imidazol-4-yl)glycerol 3-phosphate + 5-amino-1-(5-phospho-beta-D-ribosyl)imidazole-4-carboxamide + L-glutamate + H(+). It functions in the pathway amino-acid biosynthesis; L-histidine biosynthesis; L-histidine from 5-phospho-alpha-D-ribose 1-diphosphate: step 5/9. In terms of biological role, IGPS catalyzes the conversion of PRFAR and glutamine to IGP, AICAR and glutamate. The HisF subunit catalyzes the cyclization activity that produces IGP and AICAR from PRFAR using the ammonia provided by the HisH subunit. This chain is Imidazole glycerol phosphate synthase subunit HisF, found in Shewanella amazonensis (strain ATCC BAA-1098 / SB2B).